The sequence spans 240 residues: UDP-2,3-diacylglucosamine hydrolase (240 aa).

Mn(2+) contacts are provided by aspartate 8, histidine 10, aspartate 41, asparagine 79, and histidine 114. 79-80 (NR) is a binding site for substrate. The substrate site is built by aspartate 122, serine 160, asparagine 164, lysine 167, and histidine 195. Residues histidine 195 and histidine 197 each coordinate Mn(2+).

Belongs to the LpxH family. Mn(2+) is required as a cofactor.

It localises to the cell inner membrane. It carries out the reaction UDP-2-N,3-O-bis[(3R)-3-hydroxytetradecanoyl]-alpha-D-glucosamine + H2O = 2-N,3-O-bis[(3R)-3-hydroxytetradecanoyl]-alpha-D-glucosaminyl 1-phosphate + UMP + 2 H(+). Its pathway is glycolipid biosynthesis; lipid IV(A) biosynthesis; lipid IV(A) from (3R)-3-hydroxytetradecanoyl-[acyl-carrier-protein] and UDP-N-acetyl-alpha-D-glucosamine: step 4/6. In terms of biological role, hydrolyzes the pyrophosphate bond of UDP-2,3-diacylglucosamine to yield 2,3-diacylglucosamine 1-phosphate (lipid X) and UMP by catalyzing the attack of water at the alpha-P atom. Involved in the biosynthesis of lipid A, a phosphorylated glycolipid that anchors the lipopolysaccharide to the outer membrane of the cell. The protein is UDP-2,3-diacylglucosamine hydrolase of Escherichia coli O6:K15:H31 (strain 536 / UPEC).